A 183-amino-acid polypeptide reads, in one-letter code: Large ribosomal subunit protein uL5 (183 aa).

Belongs to the universal ribosomal protein uL5 family. In terms of assembly, part of the 50S ribosomal subunit; part of the 5S rRNA/L5/L18/L25 subcomplex. Contacts the 5S rRNA and the P site tRNA. Forms a bridge to the 30S subunit in the 70S ribosome.

In terms of biological role, this is one of the proteins that bind and probably mediate the attachment of the 5S RNA into the large ribosomal subunit, where it forms part of the central protuberance. In the 70S ribosome it contacts protein S13 of the 30S subunit (bridge B1b), connecting the 2 subunits; this bridge is implicated in subunit movement. Contacts the P site tRNA; the 5S rRNA and some of its associated proteins might help stabilize positioning of ribosome-bound tRNAs. The sequence is that of Large ribosomal subunit protein uL5 from Christiangramia forsetii (strain DSM 17595 / CGMCC 1.15422 / KT0803) (Gramella forsetii).